The primary structure comprises 542 residues: Glutamyl-tRNA(Gln) amidotransferase subunit A, mitochondrial (542 aa).

Active-site charge relay system residues include Lys55 and Ser143. Ser167 functions as the Acyl-ester intermediate in the catalytic mechanism.

The protein belongs to the amidase family. GatA subfamily. In terms of assembly, subunit of the heterotrimeric GatCAB amidotransferase (AdT) complex, composed of A, B and C subunits.

The protein localises to the mitochondrion. The enzyme catalyses L-glutamyl-tRNA(Gln) + L-glutamine + ATP + H2O = L-glutaminyl-tRNA(Gln) + L-glutamate + ADP + phosphate + H(+). Its function is as follows. Allows the formation of correctly charged Gln-tRNA(Gln) through the transamidation of misacylated Glu-tRNA(Gln) in the mitochondria. The reaction takes place in the presence of glutamine and ATP through an activated gamma-phospho-Glu-tRNA(Gln). This is Glutamyl-tRNA(Gln) amidotransferase subunit A, mitochondrial from Neurospora crassa (strain ATCC 24698 / 74-OR23-1A / CBS 708.71 / DSM 1257 / FGSC 987).